The chain runs to 262 residues: uncharacterized protein (262 aa).

Residues 1–211 (MAFHVMIIPS…LLYLLDSYLE (211 aa)) enclose the Radical SAM core domain. Positions 13, 17, and 20 each coordinate [4Fe-4S] cluster.

Belongs to the radical SAM superfamily. Anaerobic sulfatase-maturating enzyme family. [4Fe-4S] cluster is required as a cofactor.

This is an uncharacterized protein from Methanothermobacter thermautotrophicus (strain ATCC 29096 / DSM 1053 / JCM 10044 / NBRC 100330 / Delta H) (Methanobacterium thermoautotrophicum).